The sequence spans 218 residues: Elongation factor Ts (218 aa).

An involved in Mg(2+) ion dislocation from EF-Tu region spans residues 82–85 (TDFV).

Belongs to the EF-Ts family.

It localises to the cytoplasm. Its function is as follows. Associates with the EF-Tu.GDP complex and induces the exchange of GDP to GTP. It remains bound to the aminoacyl-tRNA.EF-Tu.GTP complex up to the GTP hydrolysis stage on the ribosome. The chain is Elongation factor Ts from Picosynechococcus sp. (strain ATCC 27264 / PCC 7002 / PR-6) (Agmenellum quadruplicatum).